Here is a 1705-residue protein sequence, read N- to C-terminus: Clathrin heavy chain 1 (1705 aa).

At alanine 2 the chain carries N-acetylalanine. The interval 2 to 492 (AAANAPIIMK…VDNDLALKIY (491 aa)) is globular terminal domain. WD40-like repeat stretches follow at residues 25–67 (FITF…RPIT), 68–113 (ADSA…MPEQ), 114–155 (VAFW…ANLA), 156–205 (NNQI…QALE), 206–270 (AHAA…PDFA), 271–314 (DDFP…ISPD), and 315–343 (PIFLTSEASSVGGFYAINRRGQVLLATVN). The segment at 462–478 (ENWLAEDKLECSEELGD) is binding site for the uncoating ATPase, involved in lattice disassembly. The interval 493–536 (IKARATPKVVAAFAERREFDKILIYSKQVGYTPDYMFLLQTILR) is flexible linker. The segment at 537 to 648 (TDPQGAVNFA…QSLKHYSELP (112 aa)) is distal segment. The tract at residues 537-1705 (TDPQGAVNFA…PYGMPPMGGY (1169 aa)) is heavy chain arm. CHCR repeat units lie at residues 551 to 697 (QMEG…QIIV), 700 to 842 (CKEY…PEDF), 847 to 986 (ILSV…QLID), 993 to 1138 (LPES…VSDA), 1142 to 1283 (FIRA…FRLA), 1288 to 1434 (LNII…DIIN), and 1437 to 1580 (LNVL…KECF). A proximal segment region spans residues 653-1705 (VIVNTHAIEP…PYGMPPMGGY (1053 aa)). Residues 1227–1536 (AAKIIYAFIS…YIYKKAGRWK (310 aa)) are involved in binding clathrin light chain. The segment at 1564–1705 (AEQLLVYFIE…PYGMPPMGGY (142 aa)) is trimerization.

It belongs to the clathrin heavy chain family. In terms of assembly, clathrin triskelions, composed of 3 heavy chains and 3 light chains, are the basic subunits of the clathrin coat. Interacts with SCYL2B.

It localises to the cytoplasmic vesicle membrane. It is found in the membrane. Its subcellular location is the coated pit. In terms of biological role, clathrin is the major protein of the polyhedral coat of coated pits and vesicles. Mediates endocytosis and is required for a correct polar distribution of PIN auxin transporters. This chain is Clathrin heavy chain 1, found in Arabidopsis thaliana (Mouse-ear cress).